Consider the following 171-residue polypeptide: Small ribosomal subunit protein uS5 (171 aa).

In terms of domain architecture, S5 DRBM spans 14–77 (LKEKLVMVNR…EKAKKKLLKI (64 aa)).

Belongs to the universal ribosomal protein uS5 family. As to quaternary structure, part of the 30S ribosomal subunit. Contacts proteins S4 and S8.

Its function is as follows. With S4 and S12 plays an important role in translational accuracy. In terms of biological role, located at the back of the 30S subunit body where it stabilizes the conformation of the head with respect to the body. The protein is Small ribosomal subunit protein uS5 of Karelsulcia muelleri (strain GWSS) (Sulcia muelleri).